Here is a 638-residue protein sequence, read N- to C-terminus: Signal recognition particle receptor subunit alpha (638 aa).

Disordered regions lie at residues 132 to 244 (APTT…GKKA) and 283 to 316 (GTGSGGQLQDLDCSSSDDEGAAQNSTKPSATKGT). 2 stretches are compositionally biased toward basic and acidic residues: residues 137–146 (KKFEDSEKAK) and 153–165 (IETRGEKPKEKAK). Position 177 is a phosphoserine (S177). Over residues 204-239 (LSKEELIRRKREEFIQKHGRGMEKSNKSTKSDAPKE) the composition is skewed to basic and acidic residues. T284 carries the post-translational modification Phosphothreonine. A phosphoserine mark is found at S296, S297, and S298. The span at 304–314 (AQNSTKPSATK) shows a compositional bias: polar residues. The tract at residues 419-636 (YVVTFCGVNG…NAKAVVAALM (218 aa)) is NG domain. Residue 425–432 (GVNGVGKS) coordinates GTP. S473 is modified (phosphoserine). 520–524 (DTAGR) provides a ligand contact to GTP. Phosphothreonine is present on T578. Position 588 to 591 (588 to 591 (TKFD)) interacts with GTP.

This sequence belongs to the GTP-binding SRP family. Heterodimer with SRPRB. Interacts with the signal recognition particle (SRP) complex subunit SRP54. As to quaternary structure, (Microbial infection) May interact with Zika virus strain Mr-766 non-structural protein 4A/NS4A. May interact with Zika virus French Polynesia 10087PF/2013 non-structural protein 4A/NS4A. In terms of assembly, (Microbial infection) May interact with Dengue virus DENV2 16681 non-structural protein 4A/NS4A.

The protein resides in the endoplasmic reticulum membrane. Component of the signal recognition particle (SRP) complex receptor (SR). Ensures, in conjunction with the SRP complex, the correct targeting of the nascent secretory proteins to the endoplasmic reticulum membrane system. Forms a guanosine 5'-triphosphate (GTP)-dependent complex with the SRP subunit SRP54. SRP receptor compaction and GTPase rearrangement drive SRP-mediated cotranslational protein translocation into the ER. This chain is Signal recognition particle receptor subunit alpha, found in Homo sapiens (Human).